The chain runs to 498 residues: Probable malate:quinone oxidoreductase (498 aa).

Belongs to the MQO family. It depends on FAD as a cofactor.

It carries out the reaction (S)-malate + a quinone = a quinol + oxaloacetate. It participates in carbohydrate metabolism; tricarboxylic acid cycle; oxaloacetate from (S)-malate (quinone route): step 1/1. In Prochlorococcus marinus (strain MIT 9312), this protein is Probable malate:quinone oxidoreductase.